Here is a 463-residue protein sequence, read N- to C-terminus: Adenosylhomocysteinase (463 aa).

Positions 54, 129, and 189 each coordinate substrate. 190 to 192 provides a ligand contact to NAD(+); that stretch reads TTT. Substrate is bound by residues Lys-219 and Asp-223. Residues Asn-224, 253 to 258, Glu-276, Asn-311, 332 to 334, and Asn-377 each bind NAD(+); these read GYGDVG and IGH.

This sequence belongs to the adenosylhomocysteinase family. NAD(+) serves as cofactor.

The protein resides in the cytoplasm. The enzyme catalyses S-adenosyl-L-homocysteine + H2O = L-homocysteine + adenosine. The protein operates within amino-acid biosynthesis; L-homocysteine biosynthesis; L-homocysteine from S-adenosyl-L-homocysteine: step 1/1. In terms of biological role, may play a key role in the regulation of the intracellular concentration of adenosylhomocysteine. The sequence is that of Adenosylhomocysteinase from Caulobacter vibrioides (strain ATCC 19089 / CIP 103742 / CB 15) (Caulobacter crescentus).